A 137-amino-acid chain; its full sequence is Large ribosomal subunit protein uL16 (137 aa).

This sequence belongs to the universal ribosomal protein uL16 family. In terms of assembly, part of the 50S ribosomal subunit.

Functionally, binds 23S rRNA and is also seen to make contacts with the A and possibly P site tRNAs. In Nitrobacter hamburgensis (strain DSM 10229 / NCIMB 13809 / X14), this protein is Large ribosomal subunit protein uL16.